The chain runs to 166 residues: Peroxynitrite isomerase Rv2717c (166 aa).

Positions 28–34 (GTWRGQG) match the GXWXGXG motif. Heme b contacts are provided by Thr-40 and His-158.

Belongs to the nitrobindin family. As to quaternary structure, homodimer. Heme b is required as a cofactor.

The protein localises to the cytoplasm. It catalyses the reaction peroxynitrite = nitrate. Its pathway is nitrogen metabolism. Functionally, heme-binding protein able to scavenge peroxynitrite and to protect free L-tyrosine against peroxynitrite-mediated nitration, by acting as a peroxynitrite isomerase that converts peroxynitrite to nitrate. Therefore, this protein likely plays a role in peroxynitrite sensing and in the detoxification of reactive nitrogen and oxygen species (RNS and ROS, respectively). Is able to bind nitric oxide (NO) in vitro, but may act as a sensor of peroxynitrite levels in vivo. The chain is Peroxynitrite isomerase Rv2717c from Arabidopsis thaliana (Mouse-ear cress).